The following is a 613-amino-acid chain: DNA mismatch repair protein MutL (613 aa).

The protein belongs to the DNA mismatch repair MutL/HexB family.

In terms of biological role, this protein is involved in the repair of mismatches in DNA. It is required for dam-dependent methyl-directed DNA mismatch repair. May act as a 'molecular matchmaker', a protein that promotes the formation of a stable complex between two or more DNA-binding proteins in an ATP-dependent manner without itself being part of a final effector complex. The protein is DNA mismatch repair protein MutL of Bradyrhizobium sp. (strain ORS 278).